A 315-amino-acid chain; its full sequence is Probable cell division protein WhiA (315 aa).

Residues 280–313 (SLKELGDLLDPPLSKSGVAYRMRKLEESVKEILQ) constitute a DNA-binding region (H-T-H motif).

Belongs to the WhiA family.

Functionally, involved in cell division and chromosome segregation. This chain is Probable cell division protein WhiA, found in Syntrophomonas wolfei subsp. wolfei (strain DSM 2245B / Goettingen).